Consider the following 475-residue polypeptide: Sulfate adenylyltransferase subunit 1 (475 aa).

The region spanning 25 to 240 (KSLLRFLTCG…VLETVEVINL (216 aa)) is the tr-type G domain. The segment at 34 to 41 (GSVDDGKS) is G1. Residue 34 to 41 (GSVDDGKS) coordinates GTP. The G2 stretch occupies residues 92-96 (GITID). Residues 113-116 (DTPG) form a G3 region. GTP is bound by residues 113–117 (DTPGH) and 168–171 (NKMD). The segment at 168 to 171 (NKMD) is G4. The interval 206–208 (SAL) is G5.

It belongs to the TRAFAC class translation factor GTPase superfamily. Classic translation factor GTPase family. CysN/NodQ subfamily. Heterodimer composed of CysD, the smaller subunit, and CysN.

The catalysed reaction is sulfate + ATP + H(+) = adenosine 5'-phosphosulfate + diphosphate. It participates in sulfur metabolism; hydrogen sulfide biosynthesis; sulfite from sulfate: step 1/3. Functionally, with CysD forms the ATP sulfurylase (ATPS) that catalyzes the adenylation of sulfate producing adenosine 5'-phosphosulfate (APS) and diphosphate, the first enzymatic step in sulfur assimilation pathway. APS synthesis involves the formation of a high-energy phosphoric-sulfuric acid anhydride bond driven by GTP hydrolysis by CysN coupled to ATP hydrolysis by CysD. The protein is Sulfate adenylyltransferase subunit 1 of Sodalis glossinidius (strain morsitans).